A 181-amino-acid chain; its full sequence is Adenine phosphoribosyltransferase 1 (181 aa).

It belongs to the purine/pyrimidine phosphoribosyltransferase family. As to quaternary structure, homodimer.

Its subcellular location is the cytoplasm. The enzyme catalyses AMP + diphosphate = 5-phospho-alpha-D-ribose 1-diphosphate + adenine. Its pathway is purine metabolism; AMP biosynthesis via salvage pathway; AMP from adenine: step 1/1. Its function is as follows. Catalyzes a salvage reaction resulting in the formation of AMP, that is energically less costly than de novo synthesis. In Triticum aestivum (Wheat), this protein is Adenine phosphoribosyltransferase 1 (APT1).